The following is a 207-amino-acid chain: MKLRGLYAITDSQLLAGRFLSHVEAALEGGVCLLQYRDKSDDAARRLREAEGLMKLCERYGTQLLINDDAELAARLGVGVHLGQTDGPLTPARALLGRQAIIGSTCHASLELAAQAASEGASYVAFGRFFNSVTKPGAPAANVGLLEQARAQVKLPIAVIGGITLDNAAPLVAHGADLLAVIHGLFGADSAQEVTRRARAFNALFAS.

4-amino-2-methyl-5-(diphosphooxymethyl)pyrimidine-binding positions include 35 to 39 (QYRDK) and N67. Mg(2+)-binding residues include D68 and D86. Position 105 (T105) interacts with 4-amino-2-methyl-5-(diphosphooxymethyl)pyrimidine. 2-[(2R,5Z)-2-carboxy-4-methylthiazol-5(2H)-ylidene]ethyl phosphate is bound at residue 132–134 (SVT). K135 lines the 4-amino-2-methyl-5-(diphosphooxymethyl)pyrimidine pocket. G162 contributes to the 2-[(2R,5Z)-2-carboxy-4-methylthiazol-5(2H)-ylidene]ethyl phosphate binding site.

The protein belongs to the thiamine-phosphate synthase family. Mg(2+) serves as cofactor.

It carries out the reaction 2-[(2R,5Z)-2-carboxy-4-methylthiazol-5(2H)-ylidene]ethyl phosphate + 4-amino-2-methyl-5-(diphosphooxymethyl)pyrimidine + 2 H(+) = thiamine phosphate + CO2 + diphosphate. The catalysed reaction is 2-(2-carboxy-4-methylthiazol-5-yl)ethyl phosphate + 4-amino-2-methyl-5-(diphosphooxymethyl)pyrimidine + 2 H(+) = thiamine phosphate + CO2 + diphosphate. The enzyme catalyses 4-methyl-5-(2-phosphooxyethyl)-thiazole + 4-amino-2-methyl-5-(diphosphooxymethyl)pyrimidine + H(+) = thiamine phosphate + diphosphate. The protein operates within cofactor biosynthesis; thiamine diphosphate biosynthesis; thiamine phosphate from 4-amino-2-methyl-5-diphosphomethylpyrimidine and 4-methyl-5-(2-phosphoethyl)-thiazole: step 1/1. Its function is as follows. Condenses 4-methyl-5-(beta-hydroxyethyl)thiazole monophosphate (THZ-P) and 2-methyl-4-amino-5-hydroxymethyl pyrimidine pyrophosphate (HMP-PP) to form thiamine monophosphate (TMP). The sequence is that of Thiamine-phosphate synthase from Pseudomonas putida (strain ATCC 700007 / DSM 6899 / JCM 31910 / BCRC 17059 / LMG 24140 / F1).